The chain runs to 555 residues: Poly(A) polymerase PAPa (555 aa).

The interval 1–20 is disordered; the sequence is MNNQAYGVTPPISVANSTPK. Residues 86–88, 99–101, Asp153, Lys214, Tyr223, and 232–233 contribute to the ATP site; these read FGS, DID, and GV. Residues Asp99, Asp101, and Asp153 each coordinate Mg(2+). The interval 532-555 is disordered; the sequence is KRKRAVSKNEGKKKPKSVGTVSAA.

It belongs to the poly(A) polymerase family. Mg(2+) serves as cofactor. The cofactor is Mn(2+).

The protein resides in the nucleus. The catalysed reaction is RNA(n) + ATP = RNA(n)-3'-adenine ribonucleotide + diphosphate. In terms of biological role, polymerase that creates the 3'-poly(A) tail of mRNA's. May acquire specificity through interaction with a cleavage and polyadenylation factor. The sequence is that of Poly(A) polymerase PAPa (PAPA) from Candida albicans (strain SC5314 / ATCC MYA-2876) (Yeast).